We begin with the raw amino-acid sequence, 634 residues long: Threonine--tRNA ligase (634 aa).

The 61-residue stretch at 1-61 (MINIRFPDGS…NSNCELRLIT (61 aa)) folds into the TGS domain. Positions 241 to 532 (DHRKIGKVLD…LIEHYAGNLP (292 aa)) are catalytic. Zn(2+) is bound by residues C332, H383, and H509.

Belongs to the class-II aminoacyl-tRNA synthetase family. As to quaternary structure, homodimer. It depends on Zn(2+) as a cofactor.

It localises to the cytoplasm. The catalysed reaction is tRNA(Thr) + L-threonine + ATP = L-threonyl-tRNA(Thr) + AMP + diphosphate + H(+). Catalyzes the attachment of threonine to tRNA(Thr) in a two-step reaction: L-threonine is first activated by ATP to form Thr-AMP and then transferred to the acceptor end of tRNA(Thr). Also edits incorrectly charged L-seryl-tRNA(Thr). This is Threonine--tRNA ligase from Francisella tularensis subsp. tularensis (strain WY96-3418).